Here is a 434-residue protein sequence, read N- to C-terminus: ATP-dependent RNA helicase sub2 (434 aa).

Positions Thr59 to Gln87 match the Q motif motif. In terms of domain architecture, Helicase ATP-binding spans Ile90 to Val265. Ala103–Thr110 lines the ATP pocket. The short motif at Asp212–Asp215 is the DECD box element. The Helicase C-terminal domain occupies Lys293–Ser430.

It belongs to the DEAD box helicase family. DECD subfamily.

Its subcellular location is the nucleus. It carries out the reaction ATP + H2O = ADP + phosphate + H(+). In terms of biological role, ATP-binding RNA helicase involved in transcription elongation and required for the export of mRNA out of the nucleus. SUB2 also plays a role in pre-mRNA splicing and spliceosome assembly. May be involved in rDNA and telomeric silencing, and maintenance of genome integrity. The sequence is that of ATP-dependent RNA helicase sub2 (sub2) from Emericella nidulans (strain FGSC A4 / ATCC 38163 / CBS 112.46 / NRRL 194 / M139) (Aspergillus nidulans).